Reading from the N-terminus, the 179-residue chain is Stress response regulator gls24 homolog (179 aa).

Residues 147–179 (TSEFTSHQVENVKASVDNGVEKLQDQKAEPRVK) are disordered. Over residues 165 to 179 (GVEKLQDQKAEPRVK) the composition is skewed to basic and acidic residues.

Belongs to the asp23 family.

This Streptococcus pyogenes serotype M28 (strain MGAS6180) protein is Stress response regulator gls24 homolog.